The chain runs to 511 residues: 2,3-bisphosphoglycerate-independent phosphoglycerate mutase (511 aa).

Aspartate 12 and serine 62 together coordinate Mn(2+). Catalysis depends on serine 62, which acts as the Phosphoserine intermediate. Residues histidine 123, 153 to 154 (RD), arginine 185, arginine 191, 260 to 263 (RPDR), and lysine 335 contribute to the substrate site. Positions 402, 406, 443, 444, and 462 each coordinate Mn(2+).

The protein belongs to the BPG-independent phosphoglycerate mutase family. Monomer. Requires Mn(2+) as cofactor.

The catalysed reaction is (2R)-2-phosphoglycerate = (2R)-3-phosphoglycerate. The protein operates within carbohydrate degradation; glycolysis; pyruvate from D-glyceraldehyde 3-phosphate: step 3/5. Functionally, catalyzes the interconversion of 2-phosphoglycerate and 3-phosphoglycerate. In Acetivibrio thermocellus (strain ATCC 27405 / DSM 1237 / JCM 9322 / NBRC 103400 / NCIMB 10682 / NRRL B-4536 / VPI 7372) (Clostridium thermocellum), this protein is 2,3-bisphosphoglycerate-independent phosphoglycerate mutase.